A 683-amino-acid chain; its full sequence is Dynein, 78 kDa intermediate chain, flagellar outer arm (683 aa).

The segment at Met-1 to Ala-42 is disordered. WD repeat units follow at residues His-358–Ile-398, Lys-407–Glu-450, Asp-562–Leu-602, and Val-608–Ser-647.

This sequence belongs to the dynein intermediate chain family. Consists of at least 3 heavy chains (alpha, beta and gamma), 2 intermediate chains and 8 light chains.

Its subcellular location is the cytoplasm. The protein localises to the cytoskeleton. It localises to the flagellum axoneme. Its function is as follows. Is essential for arm assembly or attachment to the outer doublet microtubule. The chain is Dynein, 78 kDa intermediate chain, flagellar outer arm (ODA9) from Chlamydomonas reinhardtii (Chlamydomonas smithii).